A 115-amino-acid chain; its full sequence is Large ribosomal subunit protein bL19 (115 aa).

Belongs to the bacterial ribosomal protein bL19 family.

Functionally, this protein is located at the 30S-50S ribosomal subunit interface and may play a role in the structure and function of the aminoacyl-tRNA binding site. The polypeptide is Large ribosomal subunit protein bL19 (Yersinia pseudotuberculosis serotype O:1b (strain IP 31758)).